The chain runs to 359 residues: MTKLPKLSSNSSLLGLSSEDLEEFARQEGEKSFRGRQIHEWIYQRGAKSLDSISVLPKKWRDSLVRKGIQIGRLDEINRVVAEDETLKLLMGTFDGEIVETVGIPTDKRLTVCVSSQIGCPMGCKFCATGKGGLNRSLDVNEIVDQVISVRETMNRRPTHVVFMGMGEPLLNIQNVLDSIECLTSDIGIGQRKITVSTVGIPNTLSDLAKLAQDRLGRVQFTLAVSLHAPNQTLRELIIPSASSYPINSLLKDCKKYIDLTGRRVSFEYILLGGLNDKDIHAEQLANLMRGFQSHVNLIAYNPIAEENFKRPSQSRVNAFRELLENRGVAVSVRASRGRDKDAACGQLRRQTIDKIKIN.

E100 (proton acceptor) is an active-site residue. The Radical SAM core domain occupies T106–D340. A disulfide bridge connects residues C113 and C345. 3 residues coordinate [4Fe-4S] cluster: C120, C124, and C127. S-adenosyl-L-methionine-binding positions include G167 to E168, S197, S226 to H228, and N302. C345 serves as the catalytic S-methylcysteine intermediate.

This sequence belongs to the radical SAM superfamily. RlmN family. [4Fe-4S] cluster is required as a cofactor.

It is found in the cytoplasm. The enzyme catalyses adenosine(2503) in 23S rRNA + 2 reduced [2Fe-2S]-[ferredoxin] + 2 S-adenosyl-L-methionine = 2-methyladenosine(2503) in 23S rRNA + 5'-deoxyadenosine + L-methionine + 2 oxidized [2Fe-2S]-[ferredoxin] + S-adenosyl-L-homocysteine. The catalysed reaction is adenosine(37) in tRNA + 2 reduced [2Fe-2S]-[ferredoxin] + 2 S-adenosyl-L-methionine = 2-methyladenosine(37) in tRNA + 5'-deoxyadenosine + L-methionine + 2 oxidized [2Fe-2S]-[ferredoxin] + S-adenosyl-L-homocysteine. Specifically methylates position 2 of adenine 2503 in 23S rRNA and position 2 of adenine 37 in tRNAs. In Prochlorococcus marinus (strain NATL1A), this protein is Probable dual-specificity RNA methyltransferase RlmN.